Here is a 120-residue protein sequence, read N- to C-terminus: Large ribosomal subunit protein bL17 (120 aa).

This sequence belongs to the bacterial ribosomal protein bL17 family. Part of the 50S ribosomal subunit. Contacts protein L32.

In Bacillus subtilis (strain 168), this protein is Large ribosomal subunit protein bL17.